The primary structure comprises 440 residues: tRNA-2-methylthio-N(6)-dimethylallyladenosine synthase (440 aa).

One can recognise an MTTase N-terminal domain in the interval 4–120; it reads NYVYIETFGC…LNDMVLAAER (117 aa). 6 residues coordinate [4Fe-4S] cluster: cysteine 13, cysteine 49, cysteine 83, cysteine 158, cysteine 162, and cysteine 165. The Radical SAM core domain maps to 144-374; it reads GTARISSFVT…QALQKRTTME (231 aa). Residues 377–439 form the TRAM domain; it reads DVLLGTRQTV…QNSLLGELLP (63 aa).

Belongs to the methylthiotransferase family. MiaB subfamily. Monomer. Requires [4Fe-4S] cluster as cofactor.

The protein resides in the cytoplasm. It carries out the reaction N(6)-dimethylallyladenosine(37) in tRNA + (sulfur carrier)-SH + AH2 + 2 S-adenosyl-L-methionine = 2-methylsulfanyl-N(6)-dimethylallyladenosine(37) in tRNA + (sulfur carrier)-H + 5'-deoxyadenosine + L-methionine + A + S-adenosyl-L-homocysteine + 2 H(+). Catalyzes the methylthiolation of N6-(dimethylallyl)adenosine (i(6)A), leading to the formation of 2-methylthio-N6-(dimethylallyl)adenosine (ms(2)i(6)A) at position 37 in tRNAs that read codons beginning with uridine. This Pelobacter propionicus (strain DSM 2379 / NBRC 103807 / OttBd1) protein is tRNA-2-methylthio-N(6)-dimethylallyladenosine synthase.